The primary structure comprises 529 residues: Bifunctional purine biosynthesis protein PurH (529 aa).

The 148-residue stretch at 1 to 148 (MQQRRPVRRA…KNHKDVAIVV (148 aa)) folds into the MGS-like domain.

This sequence belongs to the PurH family.

The enzyme catalyses (6R)-10-formyltetrahydrofolate + 5-amino-1-(5-phospho-beta-D-ribosyl)imidazole-4-carboxamide = 5-formamido-1-(5-phospho-D-ribosyl)imidazole-4-carboxamide + (6S)-5,6,7,8-tetrahydrofolate. It carries out the reaction IMP + H2O = 5-formamido-1-(5-phospho-D-ribosyl)imidazole-4-carboxamide. Its pathway is purine metabolism; IMP biosynthesis via de novo pathway; 5-formamido-1-(5-phospho-D-ribosyl)imidazole-4-carboxamide from 5-amino-1-(5-phospho-D-ribosyl)imidazole-4-carboxamide (10-formyl THF route): step 1/1. The protein operates within purine metabolism; IMP biosynthesis via de novo pathway; IMP from 5-formamido-1-(5-phospho-D-ribosyl)imidazole-4-carboxamide: step 1/1. The chain is Bifunctional purine biosynthesis protein PurH from Citrobacter koseri (strain ATCC BAA-895 / CDC 4225-83 / SGSC4696).